We begin with the raw amino-acid sequence, 85 residues long: uncharacterized protein (85 aa).

Disordered regions lie at residues 1 to 22 and 41 to 85; these read MFAP…TSGF and EKER…SFLR. Positions 75-85 are enriched in polar residues; the sequence is FPSNYRGSFLR.

This is an uncharacterized protein from Dryophytes versicolor (chameleon treefrog).